A 258-amino-acid polypeptide reads, in one-letter code: Triosephosphate isomerase (258 aa).

11–13 is a substrate binding site; it reads NWK. Catalysis depends on H101, which acts as the Electrophile. The Proton acceptor role is filled by E173. Residues G179, S219, and 240 to 241 contribute to the substrate site; that span reads GG.

The protein belongs to the triosephosphate isomerase family. As to quaternary structure, homodimer.

Its subcellular location is the cytoplasm. It catalyses the reaction D-glyceraldehyde 3-phosphate = dihydroxyacetone phosphate. The protein operates within carbohydrate biosynthesis; gluconeogenesis. It participates in carbohydrate degradation; glycolysis; D-glyceraldehyde 3-phosphate from glycerone phosphate: step 1/1. In terms of biological role, involved in the gluconeogenesis. Catalyzes stereospecifically the conversion of dihydroxyacetone phosphate (DHAP) to D-glyceraldehyde-3-phosphate (G3P). This Streptomyces avermitilis (strain ATCC 31267 / DSM 46492 / JCM 5070 / NBRC 14893 / NCIMB 12804 / NRRL 8165 / MA-4680) protein is Triosephosphate isomerase.